The primary structure comprises 425 residues: UPF0597 protein VIBHAR_03081 (425 aa).

Belongs to the UPF0597 family.

In Vibrio campbellii (strain ATCC BAA-1116), this protein is UPF0597 protein VIBHAR_03081.